The primary structure comprises 338 residues: Lipoate-protein ligase A (338 aa).

Residues 29-216 enclose the BPL/LPL catalytic domain; that stretch reads PATQRVLFLW…AFFAHYGERI (188 aa). ATP contacts are provided by residues R71, 76 to 79, and K134; that span reads GAVF. K134 contacts (R)-lipoate.

The protein belongs to the LplA family. Monomer.

The protein resides in the cytoplasm. It catalyses the reaction L-lysyl-[lipoyl-carrier protein] + (R)-lipoate + ATP = N(6)-[(R)-lipoyl]-L-lysyl-[lipoyl-carrier protein] + AMP + diphosphate + H(+). Its pathway is protein modification; protein lipoylation via exogenous pathway; protein N(6)-(lipoyl)lysine from lipoate: step 1/2. It participates in protein modification; protein lipoylation via exogenous pathway; protein N(6)-(lipoyl)lysine from lipoate: step 2/2. Functionally, catalyzes both the ATP-dependent activation of exogenously supplied lipoate to lipoyl-AMP and the transfer of the activated lipoyl onto the lipoyl domains of lipoate-dependent enzymes. The protein is Lipoate-protein ligase A of Salmonella paratyphi A (strain ATCC 9150 / SARB42).